Reading from the N-terminus, the 353-residue chain is Photosystem II D2 protein (353 aa).

Threonine 2 is modified (N-acetylthreonine). At threonine 2 the chain carries Phosphothreonine. The chain crosses the membrane as a helical span at residues 41-61 (CAYFALGGWFTGTTFVTSWYT). Residue histidine 118 participates in chlorophyll a binding. The helical transmembrane segment at 125–141 (GFMLRQFELARSVQLRP) threads the bilayer. Glutamine 130 and asparagine 143 together coordinate pheophytin a. The helical transmembrane segment at 153–166 (VFVSVFLIYPLGQS) threads the bilayer. A chlorophyll a-binding site is contributed by histidine 198. The chain crosses the membrane as a helical span at residues 208–228 (AALLCAIHGATVENTLFEDGD). The a plastoquinone site is built by histidine 215 and phenylalanine 262. Residue histidine 215 coordinates Fe cation. Residue histidine 269 coordinates Fe cation. Residues 279–295 (GLWMSALGVVGLALNLR) form a helical membrane-spanning segment.

It belongs to the reaction center PufL/M/PsbA/D family. As to quaternary structure, PSII is composed of 1 copy each of membrane proteins PsbA, PsbB, PsbC, PsbD, PsbE, PsbF, PsbH, PsbI, PsbJ, PsbK, PsbL, PsbM, PsbT, PsbX, PsbY, PsbZ, Psb30/Ycf12, at least 3 peripheral proteins of the oxygen-evolving complex and a large number of cofactors. It forms dimeric complexes. Requires The D1/D2 heterodimer binds P680, chlorophylls that are the primary electron donor of PSII, and subsequent electron acceptors. It shares a non-heme iron and each subunit binds pheophytin, quinone, additional chlorophylls, carotenoids and lipids. There is also a Cl(-1) ion associated with D1 and D2, which is required for oxygen evolution. The PSII complex binds additional chlorophylls, carotenoids and specific lipids. as cofactor.

Its subcellular location is the plastid. It is found in the chloroplast thylakoid membrane. The catalysed reaction is 2 a plastoquinone + 4 hnu + 2 H2O = 2 a plastoquinol + O2. Functionally, photosystem II (PSII) is a light-driven water:plastoquinone oxidoreductase that uses light energy to abstract electrons from H(2)O, generating O(2) and a proton gradient subsequently used for ATP formation. It consists of a core antenna complex that captures photons, and an electron transfer chain that converts photonic excitation into a charge separation. The D1/D2 (PsbA/PsbD) reaction center heterodimer binds P680, the primary electron donor of PSII as well as several subsequent electron acceptors. D2 is needed for assembly of a stable PSII complex. The sequence is that of Photosystem II D2 protein from Aethionema grandiflorum (Persian stone-cress).